A 161-amino-acid polypeptide reads, in one-letter code: Ethylene-responsive transcription factor ERF070 (161 aa).

A disordered region spans residues 1–35 (MKRIIRISFTDAEATDSSSDEDTEERGGASQTRRR). Residues 78 to 140 (KYRGVRQRPW…IGPHAPTNFG (63 aa)) constitute a DNA-binding region (AP2/ERF).

This sequence belongs to the AP2/ERF transcription factor family. ERF subfamily.

It localises to the nucleus. Probably acts as a transcriptional activator. Binds to the GCC-box pathogenesis-related promoter element. May be involved in the regulation of gene expression by stress factors and by components of stress signal transduction pathways. The sequence is that of Ethylene-responsive transcription factor ERF070 (ERF070) from Arabidopsis thaliana (Mouse-ear cress).